The sequence spans 66 residues: Large ribosomal subunit protein bL35 (66 aa).

The segment covering 1–14 (MPKMKTKSAAKKRF) has biased composition (basic residues). Residues 1–34 (MPKMKTKSAAKKRFSMTATGKVKAGPAGKRHGMI) are disordered.

The protein belongs to the bacterial ribosomal protein bL35 family.

In Paracoccus denitrificans (strain Pd 1222), this protein is Large ribosomal subunit protein bL35.